The primary structure comprises 320 residues: Adhesin MafA 1/4 (320 aa).

An N-terminal signal peptide occupies residues 1-18 (MRARLLIPILFSVFILSA). The N-palmitoyl cysteine moiety is linked to residue Cys19. Cys19 carries S-diacylglycerol cysteine lipidation. The tract at residues 287 to 320 (NHTGNSAPSVEADNSHEGYGYSDEAVRQHRQGQP) is disordered.

The protein belongs to the MafA family.

The protein resides in the cell outer membrane. This Neisseria gonorrhoeae (strain ATCC 700825 / FA 1090) protein is Adhesin MafA 1/4 (mafA1).